Reading from the N-terminus, the 216-residue chain is Probable GTP-binding protein EngB (216 aa).

The EngB-type G domain maps to 26-200 (EGIEIAFAGR…RAKLDTWFAP (175 aa)). Residues 34 to 41 (GRSNAGKS), 61 to 65 (GRTQL), 79 to 82 (DLPG), 146 to 149 (TKAD), and 179 to 181 (YSS) each bind GTP. Mg(2+) is bound by residues Ser41 and Thr63.

The protein belongs to the TRAFAC class TrmE-Era-EngA-EngB-Septin-like GTPase superfamily. EngB GTPase family. Requires Mg(2+) as cofactor.

Its function is as follows. Necessary for normal cell division and for the maintenance of normal septation. The chain is Probable GTP-binding protein EngB from Vibrio vulnificus (strain CMCP6).